Reading from the N-terminus, the 699-residue chain is DnaJ homolog subfamily C member 14 (699 aa).

The disordered stretch occupies residues 1–230 (MAQKHPGEGG…RHRLGRKRSQ (230 aa)). Residues 75–84 (HGPPRGPGPP) are compositionally biased toward pro residues. The segment covering 86 to 102 (AEEDPDQSEASSEESGV) has biased composition (acidic residues). Residues 117–133 (DGNSSFLSIPSTCNCQG) show a composition bias toward polar residues. Positions 163-176 (GEDEELEGEYDEEE) are enriched in acidic residues. The segment covering 203-218 (PAKEDTREGGRRDPRS) has biased composition (basic and acidic residues). Over residues 219 to 228 (PGRHRLGRKR) the composition is skewed to basic residues. Transmembrane regions (helical) follow at residues 251 to 271 (AGFWWLIELLVLVGEYVETCG), 301 to 321 (GWAQVMFQFLSQGFCYGAGLF), and 327 to 347 (LVGALLLLALALLLGCLQLGW). A J domain is found at 444-508 (NPFHVLGVEA…ERRKEYEMKR (65 aa)). The tract at residues 655-699 (MSNGNFFAAPQPGPGATAASKPNSTVPKGEAKPKRRKKVRRPFQR) is disordered. Positions 662 to 673 (AAPQPGPGATAA) are enriched in low complexity. Positions 687–699 (PKRRKKVRRPFQR) are enriched in basic residues.

As to quaternary structure, interacts with the FxxxFxxxF motif of DRD1 via its C-terminal domain. Interacts with pestivirus nonstructural protein NS2.

The protein localises to the endoplasmic reticulum membrane. Its function is as follows. Regulates the export of target proteins, such as DRD1, from the endoplasmic reticulum to the cell surface. Promotes cleavage of pestivirus polyprotein. The polypeptide is DnaJ homolog subfamily C member 14 (DNAJC14) (Bos taurus (Bovine)).